The chain runs to 488 residues: Glycogen synthase (488 aa).

Position 20 (arginine 20) interacts with ADP-alpha-D-glucose.

The protein belongs to the glycosyltransferase 1 family. Bacterial/plant glycogen synthase subfamily.

The enzyme catalyses [(1-&gt;4)-alpha-D-glucosyl](n) + ADP-alpha-D-glucose = [(1-&gt;4)-alpha-D-glucosyl](n+1) + ADP + H(+). It functions in the pathway glycan biosynthesis; glycogen biosynthesis. Its function is as follows. Synthesizes alpha-1,4-glucan chains using ADP-glucose. The sequence is that of Glycogen synthase from Chlorobaculum tepidum (strain ATCC 49652 / DSM 12025 / NBRC 103806 / TLS) (Chlorobium tepidum).